The chain runs to 440 residues: O-glycoside alpha-1,2-mannosyltransferase homolog 4 (440 aa).

At 1 to 35 (MLGWNKHVFFSESRINFRCLLRKKLKKRCPLSARF) the chain is on the cytoplasmic side. Residues 36-56 (VLVLLLIVLIFILKMGYKQLI) traverse the membrane as a helical; Signal-anchor for type II membrane protein segment. The Lumenal segment spans residues 57 to 440 (YKLNHPPLRR…NLIGDGFLDE (384 aa)). E336 (nucleophile) is an active-site residue.

It belongs to the glycosyltransferase 15 family.

Its subcellular location is the cytoplasm. It localises to the nucleus. It is found in the golgi apparatus membrane. Functionally, probable mannosyltransferase involved in O-glycosylation of cell wall and secreted proteins. Transfers an alpha-D-mannosyl residue from GDP-mannose into lipid-linked oligosaccharide, forming an alpha-(1-&gt;2)-D-mannosyl-D-mannose linkage. The chain is O-glycoside alpha-1,2-mannosyltransferase homolog 4 (omh4) from Schizosaccharomyces pombe (strain 972 / ATCC 24843) (Fission yeast).